The primary structure comprises 212 residues: Protein DEPP1 (212 aa).

3 disordered regions span residues 20-39 (EEML…SLDD), 49-79 (QPTS…GRPA), and 113-176 (QEKQ…SDLR). Positions 113–124 (QEKQPSQRDLPR) are enriched in basic and acidic residues.

In terms of tissue distribution, expressed in various tissues, including pancreas, placenta, ovary, testis and kidney.

The protein resides in the cytoplasm. It is found in the peroxisome. It localises to the mitochondrion. Functionally, acts as a critical modulator of FOXO3-induced autophagy via increased cellular ROS. In Homo sapiens (Human), this protein is Protein DEPP1.